The following is a 745-amino-acid chain: Elongation factor G, mitochondrial (745 aa).

Residues 40 to 317 (ERIRNIGISA…AVLDYLPNPG (278 aa)) form the tr-type G domain. Residues 49 to 56 (AHIDSGKT), 116 to 120 (DTPGH), and 170 to 173 (NKLD) each bind GTP.

It belongs to the TRAFAC class translation factor GTPase superfamily. Classic translation factor GTPase family. EF-G/EF-2 subfamily.

It localises to the mitochondrion. The protein operates within protein biosynthesis; polypeptide chain elongation. Mitochondrial GTPase that catalyzes the GTP-dependent ribosomal translocation step during translation elongation. During this step, the ribosome changes from the pre-translocational (PRE) to the post-translocational (POST) state as the newly formed A-site-bound peptidyl-tRNA and P-site-bound deacylated tRNA move to the P and E sites, respectively. Catalyzes the coordinated movement of the two tRNA molecules, the mRNA and conformational changes in the ribosome. Essential during development as it acts as a retrograde signal from mitochondria to the nucleus to slow down cell proliferation if mitochondrial energy output is low. The polypeptide is Elongation factor G, mitochondrial (Drosophila sechellia (Fruit fly)).